Here is a 201-residue protein sequence, read N- to C-terminus: Probable nicotinate-nucleotide adenylyltransferase (201 aa).

Belongs to the NadD family.

The enzyme catalyses nicotinate beta-D-ribonucleotide + ATP + H(+) = deamido-NAD(+) + diphosphate. It participates in cofactor biosynthesis; NAD(+) biosynthesis; deamido-NAD(+) from nicotinate D-ribonucleotide: step 1/1. Catalyzes the reversible adenylation of nicotinate mononucleotide (NaMN) to nicotinic acid adenine dinucleotide (NaAD). This chain is Probable nicotinate-nucleotide adenylyltransferase, found in Clostridium botulinum (strain ATCC 19397 / Type A).